Reading from the N-terminus, the 21-residue chain is Alpha-aminoadipic semialdehyde dehydrogenase (21 aa).

Belongs to the aldehyde dehydrogenase family. As to quaternary structure, homotetramer.

The enzyme catalyses (S)-2-amino-6-oxohexanoate + NADP(+) + H2O = L-2-aminoadipate + NADPH + 2 H(+). The catalysed reaction is (S)-2-amino-6-oxohexanoate + NAD(+) + H2O = L-2-aminoadipate + NADH + 2 H(+). This is Alpha-aminoadipic semialdehyde dehydrogenase (aldh7a1) from Ctenopharyngodon idella (Grass carp).